The chain runs to 1094 residues: Probable arabinosyltransferase A (1094 aa).

13 helical membrane passes run 12 to 34, 205 to 224, 247 to 269, 322 to 344, 356 to 375, 408 to 430, 451 to 470, 519 to 536, 543 to 565, 575 to 597, 604 to 626, 641 to 663, and 684 to 706; these read IARLAAVVSGIAGLLLCGIVPLL, AVMLLGVLAVLVAMVGLAAL, GFASRLADAAVIATLLLWHVIGA, VWMRLPATLAGIACWLIVSRFVL, SNRVAVFTAGAVFLSAWLPF, AAVAIIVATLTATLAPQGLIALA, GLLAPLAVLAAALSLITVVV, FAVLVLLFCLFGVLFVLL, GLASGPAWRLIGTTAVGLLLLTF, GAFAGLAGVLGAVTAFTFARIGL, TLYVTALLFVLAWATSGINGWFY, IASHPVTSMFLTLSILTGLLAAW, and ILASTPLLVVAVIMVAGEVGSMA.

This sequence belongs to the emb family.

It localises to the cell membrane. In terms of biological role, arabinosyl transferase responsible for the polymerization of arabinose into the arabinan of arabinogalactan. The sequence is that of Probable arabinosyltransferase A (embA) from Mycobacterium tuberculosis (strain CDC 1551 / Oshkosh).